The primary structure comprises 250 residues: Homeobox protein Dlx4a (250 aa).

The homeobox DNA-binding region spans isoleucine 123–methionine 182. Residues methionine 182–alanine 202 form a disordered region.

This sequence belongs to the distal-less homeobox family.

The protein localises to the nucleus. This chain is Homeobox protein Dlx4a (dlx4a), found in Danio rerio (Zebrafish).